The primary structure comprises 124 residues: Cholera enterotoxin subunit B (124 aa).

A signal peptide spans Met-1 to Gly-21. Cys-30 and Cys-107 are joined by a disulfide.

As to quaternary structure, the holotoxin (choleragen) consists of a pentameric ring of B subunits whose central pore is occupied by the A subunit. The A subunit contains two chains, A1 and A2, linked by a disulfide bridge.

It is found in the secreted. It localises to the host cell membrane. In terms of biological role, the B subunit pentameric ring directs the A subunit to its target by binding to the GM1 gangliosides present on the surface of the intestinal epithelial cells. It can bind five GM1 gangliosides. It has no toxic activity by itself. This Vibrio cholerae serotype O1 (strain ATCC 39315 / El Tor Inaba N16961) protein is Cholera enterotoxin subunit B (ctxB).